Here is a 124-residue protein sequence, read N- to C-terminus: Small ribosomal subunit protein uS12 (124 aa).

Positions 1–25 (MPTINQLIRKPRKSQKEKTASPALQ) are disordered. 3-methylthioaspartic acid is present on D89.

This sequence belongs to the universal ribosomal protein uS12 family. Part of the 30S ribosomal subunit. Contacts proteins S8 and S17. May interact with IF1 in the 30S initiation complex.

Its function is as follows. With S4 and S5 plays an important role in translational accuracy. Interacts with and stabilizes bases of the 16S rRNA that are involved in tRNA selection in the A site and with the mRNA backbone. Located at the interface of the 30S and 50S subunits, it traverses the body of the 30S subunit contacting proteins on the other side and probably holding the rRNA structure together. The combined cluster of proteins S8, S12 and S17 appears to hold together the shoulder and platform of the 30S subunit. In Borrelia duttonii (strain Ly), this protein is Small ribosomal subunit protein uS12.